The sequence spans 364 residues: MDPPLKDGVIMRQHRISIFKKRRRSMKDIKILGVDIAKDVFQLCGIDEWGKVIYTRRVKRAQYVSTVASLKVGCVVMEACGGANHWYRTFMGMGIPTQLISPQHVKPYVKSNKNDRNDAQAIAEAASRASMRFVQGKTVEQQDVQALLKIRDRLVKSRTALINEIRGLLQEYGLTMARGAKRFYEELPLILASEAVGLTPRMKRVLNCLYTELLNRDEAIGDYEEELKAVAKANEDCQRVQSIPGVGYLTALSVYASVGDIHQFHRSRQLSAFIGLVPRQHSSGNKEVLLGISKRGNVMLRTLLIHGARALLRHVKNKTDKKSLWLKALIERRGMNRACVALANKNAPIIWALLTRQETYRCGA.

The protein belongs to the transposase IS1111A/IS1328/IS1533 family.

Its function is as follows. Required for the transposition of the insertion element. The protein is Transposase for insertion sequence element IS1111A of Coxiella burnetii (strain RSA 493 / Nine Mile phase I).